The chain runs to 997 residues: Signal peptide, CUB and EGF-like domain-containing protein 2 (997 aa).

The signal sequence occupies residues 1 to 28 (MGVAGCGRPREARALLLLLLLLPPLLAA). The EGF-like 1; calcium-binding domain maps to 43–83 (DVDECAQGLDDCHADALCQNTPTSYKCSCKPGYQGEGRQCE). 8 cysteine pairs are disulfide-bonded: Cys47/Cys60, Cys54/Cys69, Cys71/Cys82, Cys88/Cys100, Cys96/Cys109, Cys111/Cys124, Cys130/Cys141, and Cys137/Cys150. One can recognise an EGF-like 2; calcium-binding domain in the interval 84–125 (DMDECDNTLNGGCVHDCLNIPGNYRCTCFDGFMLAHDGHNCL). In terms of domain architecture, EGF-like 3; calcium-binding spans 126 to 162 (DMDECLENNGGCQHICTNVIGSYECRCKEGFFLSDNQ). EGF-like domains follow at residues 175-211 (CMNKDHGCGHICKEAPRGSVACECRPGFELAKNQKDC), 215-250 (CNHGNGGCQHSCEDTAEGPECSCHPRYRLHADGRSC), and 284-319 (CAVNNGGCDRTCKDTSTGVHCSCPTGFTLQVDGKTC). The region spanning 321 to 361 (DIDECQTRNGGCNHFCKNTVGSFDCSCKKGFKLLTDEKSCQ) is the EGF-like 7; calcium-binding domain. 9 disulfide bridges follow: Cys325-Cys336, Cys332-Cys345, Cys347-Cys360, Cys366-Cys376, Cys372-Cys385, Cys387-Cys399, Cys405-Cys416, Cys412-Cys425, and Cys427-Cys440. In terms of domain architecture, EGF-like 8; calcium-binding spans 362 to 400 (DVDECSLERTCDHSCINHPGTFICACNPGYTLYSFTHCG). Residues 401–441 (DTNECSVNNGGCQQVCINTVGSYECQCHPGFKLHWNKKDCV) form the EGF-like 9; calcium-binding domain. Asn657 carries an N-linked (GlcNAc...) asparagine glycan. Cys807 and Cys833 are oxidised to a cystine. One can recognise a CUB domain in the interval 807–919 (CGGELGDFTG…RGFQVPYVTY (113 aa)). The interval 845 to 854 (ILIVVPEIFL) is interaction with the cholesterol-anchor of SHH. The cysteines at positions 860 and 881 are disulfide-linked.

In terms of assembly, interacts with SHH via the cholesterol anchor of the dually lipid-modified SHH (ShhNp). Interacts with PTCH1. Forms homooligomers and heterooligomers with SCUBE1 and SCUBE3. Interacts with VEGFR2. N-glycosylated. In terms of tissue distribution, expressed in adult heart, lung and testis.

It localises to the secreted. The protein localises to the cell surface. In terms of biological role, lipid-binding protein required for SHH long-range signaling by binding to the dually lipid-modified SHH (ShhNp) and by promoting ShhNp mobilization, solubilization and release from the cell membrane. Acts by enhancing the proteolytic processing (shedding) of the lipid-modified N- and C- terminal of ShhNp at the cell surface. Synergizes with DISP1 to cause an increase in SHH secretion. Probable cell surface coreceptor for VEGFR2 involved in VEGFR2-mediated angiogenesis. The sequence is that of Signal peptide, CUB and EGF-like domain-containing protein 2 from Mus musculus (Mouse).